Here is a 231-residue protein sequence, read N- to C-terminus: 5'-methylthioadenosine/S-adenosylhomocysteine nucleosidase (231 aa).

The Proton acceptor role is filled by glutamate 12. Substrate-binding positions include glycine 78, methionine 153, and 174 to 175; that span reads ME. Aspartate 198 serves as the catalytic Proton donor.

It belongs to the PNP/UDP phosphorylase family. MtnN subfamily.

It carries out the reaction S-adenosyl-L-homocysteine + H2O = S-(5-deoxy-D-ribos-5-yl)-L-homocysteine + adenine. It catalyses the reaction S-methyl-5'-thioadenosine + H2O = 5-(methylsulfanyl)-D-ribose + adenine. The enzyme catalyses 5'-deoxyadenosine + H2O = 5-deoxy-D-ribose + adenine. Its pathway is amino-acid biosynthesis; L-methionine biosynthesis via salvage pathway; S-methyl-5-thio-alpha-D-ribose 1-phosphate from S-methyl-5'-thioadenosine (hydrolase route): step 1/2. Catalyzes the irreversible cleavage of the glycosidic bond in both 5'-methylthioadenosine (MTA) and S-adenosylhomocysteine (SAH/AdoHcy) to adenine and the corresponding thioribose, 5'-methylthioribose and S-ribosylhomocysteine, respectively. Also cleaves 5'-deoxyadenosine, a toxic by-product of radical S-adenosylmethionine (SAM) enzymes, into 5-deoxyribose and adenine. The chain is 5'-methylthioadenosine/S-adenosylhomocysteine nucleosidase from Bacillus velezensis (strain DSM 23117 / BGSC 10A6 / LMG 26770 / FZB42) (Bacillus amyloliquefaciens subsp. plantarum).